The chain runs to 637 residues: MALLSIVSLQVPKSCGLKSLISSSNVQKALCISTAVPTLRMRRRQKALVINMKLTTVSHRDDNGGGVLQRRIADHHPNLWEDDFIQSLSSPYGGSSYSERAETVVEEVKEMFNSIPNNRELFGSQNDLLTRLWMVDSIERLGIDRHFQNEIRVALDYVYSYWKEKEGIGCGRDSTFPDLNSTALALRTLRLHGYNVSSDVLEYFKDEKGHFACPAILTEGQITRSVLNLYRASLVAFPGEKVMEEAEIFSASYLKKVLQKIPVSNLSGEIEYVLEYGWHTNLPRLEARNYIEVYEQSGYESLNEMPYMNMKKLLQLAKLEFNIFHSLQLRELQSISRWWKESGSSQLTFTRHRHVEYYTMASCISMLPKHSAFRMEFVKVCHLVTVLDDIYDTFGTMNELQLFTDAIKRWDLSTTRWLPEYMKGVYMDLYQCINEMVEEAEKTQGRDMLNYIQNAWEALFDTFMQEAKWISSSYLPTFEEYLKNAKVSSGSRIATLQPILTLDVPLPDYILQEIDYPSRFNELASSILRLRGDTRCYKADRARGEEASAISCYMKDHPGSIEEDALNHINAMISDAIRELNWELLRPDSKSPISSKKHAFDITRAFHHVYKYRDGYTVSNNETKNLVMKTVLEPLAL.

The N-terminal 56 residues, 1–56 (MALLSIVSLQVPKSCGLKSLISSSNVQKALCISTAVPTLRMRRRQKALVINMKLTT), are a transit peptide targeting the chloroplast. Mg(2+) contacts are provided by Asp388, Asp392, and Asp540. The DDXXD motif motif lies at 388–392 (DDIYD).

It belongs to the terpene synthase family. Tpsd subfamily. Mg(2+) serves as cofactor. The cofactor is Mn(2+). Requires K(+) as cofactor.

Its subcellular location is the plastid. The protein resides in the chloroplast. The enzyme catalyses (2E)-geranyl diphosphate = (4S)-limonene + diphosphate. The protein operates within terpene metabolism; oleoresin biosynthesis. In terms of biological role, involved in defensive oleoresin formation in conifers in response to insect attack or other injury. Involved in monoterpene (C10) olefins biosynthesis. In Abies grandis (Grand fir), this protein is Limonene synthase, chloroplastic (ag10).